The following is a 282-amino-acid chain: Pantothenate synthetase (282 aa).

30–37 contacts ATP; sequence MGYLHEGH. Histidine 37 acts as the Proton donor in catalysis. Position 61 (glutamine 61) interacts with (R)-pantoate. Glutamine 61 provides a ligand contact to beta-alanine. 147 to 150 contributes to the ATP binding site; the sequence is GMKD. Position 153 (glutamine 153) interacts with (R)-pantoate. Residues valine 176 and 184–187 contribute to the ATP site; that span reads KSSR.

Belongs to the pantothenate synthetase family. Homodimer.

The protein resides in the cytoplasm. The enzyme catalyses (R)-pantoate + beta-alanine + ATP = (R)-pantothenate + AMP + diphosphate + H(+). Its pathway is cofactor biosynthesis; (R)-pantothenate biosynthesis; (R)-pantothenate from (R)-pantoate and beta-alanine: step 1/1. In terms of biological role, catalyzes the condensation of pantoate with beta-alanine in an ATP-dependent reaction via a pantoyl-adenylate intermediate. The protein is Pantothenate synthetase of Bacillus anthracis (strain A0248).